Reading from the N-terminus, the 507-residue chain is MVTIRADEISNIIRERIEQYNREVTIVNTGTVLQVGDGIARIYGLDEVMAGELVEFEEGTIGIALNLESNNVGVVLMGDGLMIQEGSSVKATGKIAQIPVSEAYLGRVINALANPIDGRGQISASESRLIESPAPGIISRRSVYEPLQTGLIAIDSMIPIGRGQRELIIGDRQTGKTAVATDTILNQQGQNVICVYVAIGQKASSVAQVVTSLQERGAMEYTIVVAETADSPATLQYLAPYTGAALAEYFMYREQHTLIIYDDLSKQAQAYRQMSLLLRRPPGREAYPGDVFYLHSRLLERAAKLSSQLGEGSMTALPIVETQSGDVSAYIPTNVISITDGQIFLSADLFNAGIRPAINVGISVSRVGSAAQIKAMKQVAGKLKLELAQFAELEAFAQFSSDLDKATQNQLARGQRLRELLKQSQSAPLTVEEQIMTIYTGTNGYLDGLEIGQVRTFLVQLRTYLKTNKPQFQEIISSTKTLTPEAESFLKEGIQEQLERFLLQEKL.

Residue 170 to 177 (GDRQTGKT) participates in ATP binding. Threonine 257 carries the post-translational modification Phosphothreonine.

Belongs to the ATPase alpha/beta chains family. As to quaternary structure, F-type ATPases have 2 components, CF(1) - the catalytic core - and CF(0) - the membrane proton channel. CF(1) has five subunits: alpha(3), beta(3), gamma(1), delta(1), epsilon(1). CF(0) has four main subunits: a, b, b' and c.

The protein resides in the plastid. Its subcellular location is the chloroplast thylakoid membrane. It carries out the reaction ATP + H2O + 4 H(+)(in) = ADP + phosphate + 5 H(+)(out). Functionally, produces ATP from ADP in the presence of a proton gradient across the membrane. The alpha chain is a regulatory subunit. This chain is ATP synthase subunit alpha, chloroplastic, found in Lobularia maritima (Sweet alyssum).